The chain runs to 315 residues: Malate dehydrogenase (315 aa).

Residues 7–12 and Asp32 contribute to the NAD(+) site; that span reads GAGNIG. The substrate site is built by Arg81 and Arg87. Residues Asn94 and 117–119 each bind NAD(+); that span reads VTN. Asn119 and Arg150 together coordinate substrate. His174 acts as the Proton acceptor in catalysis.

Belongs to the LDH/MDH superfamily. MDH type 3 family.

The catalysed reaction is (S)-malate + NAD(+) = oxaloacetate + NADH + H(+). Catalyzes the reversible oxidation of malate to oxaloacetate. This chain is Malate dehydrogenase, found in Neorickettsia sennetsu (strain ATCC VR-367 / Miyayama) (Ehrlichia sennetsu).